The chain runs to 163 residues: Phosphopantetheine adenylyltransferase (163 aa).

Substrate is bound at residue Ser8. ATP-binding positions include Ser8–Phe9 and His16. Substrate contacts are provided by Lys40, Thr72, and Arg86. Residues Gly87–Arg89, Glu97, and His122–Ser128 contribute to the ATP site.

The protein belongs to the bacterial CoaD family. Homohexamer. Mg(2+) is required as a cofactor.

It is found in the cytoplasm. The catalysed reaction is (R)-4'-phosphopantetheine + ATP + H(+) = 3'-dephospho-CoA + diphosphate. It functions in the pathway cofactor biosynthesis; coenzyme A biosynthesis; CoA from (R)-pantothenate: step 4/5. In terms of biological role, reversibly transfers an adenylyl group from ATP to 4'-phosphopantetheine, yielding dephospho-CoA (dPCoA) and pyrophosphate. This Parasynechococcus marenigrum (strain WH8102) protein is Phosphopantetheine adenylyltransferase.